Consider the following 306-residue polypeptide: Lipoyl synthase (306 aa).

Positions 52, 57, 63, 78, 82, 85, and 289 each coordinate [4Fe-4S] cluster. Residues 64–278 (WNRKTATYML…KETAYKIGFK (215 aa)) form the Radical SAM core domain.

This sequence belongs to the radical SAM superfamily. Lipoyl synthase family. Requires [4Fe-4S] cluster as cofactor.

It localises to the cytoplasm. The enzyme catalyses [[Fe-S] cluster scaffold protein carrying a second [4Fe-4S](2+) cluster] + N(6)-octanoyl-L-lysyl-[protein] + 2 oxidized [2Fe-2S]-[ferredoxin] + 2 S-adenosyl-L-methionine + 4 H(+) = [[Fe-S] cluster scaffold protein] + N(6)-[(R)-dihydrolipoyl]-L-lysyl-[protein] + 4 Fe(3+) + 2 hydrogen sulfide + 2 5'-deoxyadenosine + 2 L-methionine + 2 reduced [2Fe-2S]-[ferredoxin]. It functions in the pathway protein modification; protein lipoylation via endogenous pathway; protein N(6)-(lipoyl)lysine from octanoyl-[acyl-carrier-protein]: step 2/2. Functionally, catalyzes the radical-mediated insertion of two sulfur atoms into the C-6 and C-8 positions of the octanoyl moiety bound to the lipoyl domains of lipoate-dependent enzymes, thereby converting the octanoylated domains into lipoylated derivatives. This Leptospira biflexa serovar Patoc (strain Patoc 1 / Ames) protein is Lipoyl synthase.